The chain runs to 289 residues: Probable signal peptidase I (289 aa).

Topologically, residues 1–53 are cytoplasmic; that stretch reads MTETTDSVPEPPSDADQLQPKVSICGLDMPAEVSETAAEAAIGVSEPKKRSAL. Residues 54-74 traverse the membrane as a helical segment; sequence WEFAILAVIAIGLYYVMLTFV. Topologically, residues 75–289 are extracellular; sequence ARPYLIPSES…VGSVNSQQGQ (215 aa). Residues serine 84 and lysine 162 contribute to the active site.

This sequence belongs to the peptidase S26 family.

The protein localises to the cell membrane. It catalyses the reaction Cleavage of hydrophobic, N-terminal signal or leader sequences from secreted and periplasmic proteins.. This chain is Probable signal peptidase I (lepB), found in Mycobacterium leprae (strain TN).